Reading from the N-terminus, the 373-residue chain is Forkhead box protein E1 (373 aa).

The interval K19–R51 is disordered. Basic residues predominate over residues G41–Q50. Positions K53 to K147 form a DNA-binding region, fork-head.

In terms of processing, phosphorylated. As to expression, detected in adult brain, placenta, lung, liver, skeletal muscle, kidney, pancreas, heart, colon, small intestine testis and thymus. Expression was strongest in heart and pancreas.

The protein resides in the nucleus. Transcription factor that binds consensus sites on a variety of gene promoters and activate their transcription. Involved in proper palate formation, most probably through the expression of MSX1 and TGFB3 genes which are direct targets of this transcription factor. Also implicated in thyroid gland morphogenesis. May indirectly play a role in cell growth and migration through the regulation of WNT5A expression. The polypeptide is Forkhead box protein E1 (FOXE1) (Homo sapiens (Human)).